A 123-amino-acid polypeptide reads, in one-letter code: Small ribosomal subunit protein uS13 (123 aa).

A disordered region spans residues 94-123; the sequence is GLPVRGQSTKSNARTRKGPRKTVAGKKSTK. The segment covering 106–123 has biased composition (basic residues); the sequence is ARTRKGPRKTVAGKKSTK.

The protein belongs to the universal ribosomal protein uS13 family. In terms of assembly, part of the 30S ribosomal subunit. Forms a loose heterodimer with protein S19. Forms two bridges to the 50S subunit in the 70S ribosome.

Its function is as follows. Located at the top of the head of the 30S subunit, it contacts several helices of the 16S rRNA. In the 70S ribosome it contacts the 23S rRNA (bridge B1a) and protein L5 of the 50S subunit (bridge B1b), connecting the 2 subunits; these bridges are implicated in subunit movement. Contacts the tRNAs in the A and P-sites. This chain is Small ribosomal subunit protein uS13, found in Mycoplasmopsis agalactiae (strain NCTC 10123 / CIP 59.7 / PG2) (Mycoplasma agalactiae).